Consider the following 660-residue polypeptide: DNA mismatch repair protein MutL (660 aa).

The protein belongs to the DNA mismatch repair MutL/HexB family.

This protein is involved in the repair of mismatches in DNA. It is required for dam-dependent methyl-directed DNA mismatch repair. May act as a 'molecular matchmaker', a protein that promotes the formation of a stable complex between two or more DNA-binding proteins in an ATP-dependent manner without itself being part of a final effector complex. This Streptococcus pyogenes serotype M3 (strain ATCC BAA-595 / MGAS315) protein is DNA mismatch repair protein MutL.